A 738-amino-acid polypeptide reads, in one-letter code: METLGVQTNSELREELNRLKEENARLKKELNQHQVIVNNTLDAIFICDNEMRIVQANEATERMLQVDSEDLKKRSVLDFLFSIPKDELNLSVKKFFKKGFLWKEVPIRLDCGATKYIEFLAKRGIGEDFFFVVMRDISSKKILEREFSMNEQLFKDLFDRAVDGIVLFDKDGGFIDANLSFCKSFEINHNELSHLSLYEFIDSGSRKDFDNIWKALNRKGKAKGELPVKLRSGVQKLFEFTITSNIISGFYMSIMRDITEKRSMELQLFKSEERFREIFENAMDAIIIWSNDGRIVKANQSACKIFELPMNLLLKRKLCDFLVDSQQKYSITKRKYAKYGEIREELLFQMGNGQFKELEFTSKRTILENQHLTILRNVSDRKRMEKELRESELKFRKVFNGSMDGNVLFDNQYRIIDANPLASHILGLSHEEIKQHSLLDIISAYEIENLASPARQINFDEMDNEIPFLLSSGDNRKLEFSFKRNIIQNMNLAIFKDVTERKELEERLRKSDTLHVVGELAAGIAHEIRNPMTALKGFIQLLKGSVEGDYALYFNVITSELKRIESIITEFLILAKPQAIMYEEKHVTQIMRDTIDLLNAQANLSNVQMQLDLIDDIPPIYCEPNQLKQVFINILKNAIEVMPDGGNIFVTIKALDQDHVLISLKDEGIGMTEDKLKRLGEPFYTTKERGTGLGLMVSYKIIEEHQGEIMVESEEGKGTVFHITLPVRQNAEERRNDE.

PAS domains lie at Glu29–Gly99, Asn150–Gly220, Ser271–Ile342, and Ser391–Met462. One can recognise a Histidine kinase domain in the interval Gly523–Gln729. His526 is subject to Phosphohistidine; by autocatalysis.

It carries out the reaction ATP + protein L-histidine = ADP + protein N-phospho-L-histidine.. Its function is as follows. Phosphorylates the sporulation-regulatory protein spo0A under biofilm growth conditions. Also able to weakly phosphorylate spo0F. The polypeptide is Sporulation kinase E (kinE) (Bacillus subtilis (strain 168)).